The sequence spans 474 residues: uncharacterized protein (474 aa).

A helical membrane pass occupies residues 374 to 398 (GLICYLALFSISLMIENIIGLTISL).

It localises to the membrane. This is an uncharacterized protein from Borreliella burgdorferi (strain ATCC 35210 / DSM 4680 / CIP 102532 / B31) (Borrelia burgdorferi).